Here is a 228-residue protein sequence, read N- to C-terminus: Large ribosomal subunit protein bL25 (228 aa).

The disordered stretch occupies residues 196-228; it reads EEAAVAEAQSAESAEGKAEAEAEATNEKNKSEA. The segment covering 209–228 has biased composition (basic and acidic residues); that stretch reads AEGKAEAEAEATNEKNKSEA.

This sequence belongs to the bacterial ribosomal protein bL25 family. CTC subfamily. In terms of assembly, part of the 50S ribosomal subunit; part of the 5S rRNA/L5/L18/L25 subcomplex. Contacts the 5S rRNA. Binds to the 5S rRNA independently of L5 and L18.

This is one of the proteins that binds to the 5S RNA in the ribosome where it forms part of the central protuberance. This chain is Large ribosomal subunit protein bL25, found in Methylorubrum extorquens (strain CM4 / NCIMB 13688) (Methylobacterium extorquens).